Reading from the N-terminus, the 654-residue chain is DNA ligase (654 aa).

NAD(+) contacts are provided by residues 31-35 (DSEYD), 80-81 (SL), and Glu109. Lys111 serves as the catalytic N6-AMP-lysine intermediate. Positions 132, 166, 280, and 304 each coordinate NAD(+). Cys398, Cys401, Cys416, and Cys421 together coordinate Zn(2+). In terms of domain architecture, BRCT spans 579–654 (NIEGILSGKT…IWSEQDLLDL (76 aa)).

The protein belongs to the NAD-dependent DNA ligase family. LigA subfamily. It depends on Mg(2+) as a cofactor. Mn(2+) serves as cofactor.

It catalyses the reaction NAD(+) + (deoxyribonucleotide)n-3'-hydroxyl + 5'-phospho-(deoxyribonucleotide)m = (deoxyribonucleotide)n+m + AMP + beta-nicotinamide D-nucleotide.. Functionally, DNA ligase that catalyzes the formation of phosphodiester linkages between 5'-phosphoryl and 3'-hydroxyl groups in double-stranded DNA using NAD as a coenzyme and as the energy source for the reaction. It is essential for DNA replication and repair of damaged DNA. The chain is DNA ligase from Lactococcus lactis subsp. lactis (strain IL1403) (Streptococcus lactis).